Reading from the N-terminus, the 185-residue chain is Large ribosomal subunit protein uL6 (185 aa).

This sequence belongs to the universal ribosomal protein uL6 family. Part of the 50S ribosomal subunit.

In terms of biological role, this protein binds to the 23S rRNA, and is important in its secondary structure. It is located near the subunit interface in the base of the L7/L12 stalk, and near the tRNA binding site of the peptidyltransferase center. The protein is Large ribosomal subunit protein uL6 of Deinococcus deserti (strain DSM 17065 / CIP 109153 / LMG 22923 / VCD115).